A 346-amino-acid chain; its full sequence is Farnesyl diphosphate synthase 1 (346 aa).

Residues Lys52, Arg55, and Gln90 each contribute to the isopentenyl diphosphate site. Asp97 and Asp101 together coordinate Mg(2+). Positions 97 to 101 (DDIMD) match the DDXXD motif motif. Arg106 provides a ligand contact to dimethylallyl diphosphate. Isopentenyl diphosphate is bound at residue Arg107. Dimethylallyl diphosphate contacts are provided by Lys194, Thr195, and Gln233. The short motif at 236 to 240 (DDYLD) is the DDXXD motif element. Residues Lys250 and Lys259 each coordinate dimethylallyl diphosphate.

This sequence belongs to the FPP/GGPP synthase family. It depends on Mg(2+) as a cofactor. Requires Mn(2+) as cofactor. Highly expressed in shoots.

The catalysed reaction is isopentenyl diphosphate + (2E)-geranyl diphosphate = (2E,6E)-farnesyl diphosphate + diphosphate. The enzyme catalyses isopentenyl diphosphate + dimethylallyl diphosphate = (2E)-geranyl diphosphate + diphosphate. It functions in the pathway isoprenoid biosynthesis; farnesyl diphosphate biosynthesis; farnesyl diphosphate from geranyl diphosphate and isopentenyl diphosphate: step 1/1. Its pathway is isoprenoid biosynthesis; geranyl diphosphate biosynthesis; geranyl diphosphate from dimethylallyl diphosphate and isopentenyl diphosphate: step 1/1. Functionally, catalyzes the sequential condensation of isopentenyl pyrophosphate (IPP) with the allylic pyrophosphates, dimethylallyl pyrophosphate (DMAPP), and then with the resultant geranylpyrophosphate (GPP) to the ultimate product farnesyl pyrophosphate (FPP). Has a 4.5 time greater affinity for GPP versus DMAPP. The polypeptide is Farnesyl diphosphate synthase 1 (FDS-1) (Artemisia spiciformis (Spiked big sagebrush)).